The primary structure comprises 321 residues: Putative membrane-bound redox modulator Alx (321 aa).

The Periplasmic segment spans residues Met-1–Thr-6. Residues Pro-7–Leu-27 traverse the membrane as a helical segment. At Gln-28–Ala-43 the chain is on the cytoplasmic side. A helical transmembrane segment spans residues Trp-44 to Val-64. Over Gln-65 to Leu-89 the chain is Periplasmic. Residues Ala-90–Leu-110 traverse the membrane as a helical segment. Over Gln-111–Arg-113 the chain is Cytoplasmic. Residues Val-114–Ser-134 form a helical membrane-spanning segment. A topological domain (periplasmic) is located at residue Trp-135. A helical transmembrane segment spans residues Leu-136–Val-156. The Cytoplasmic portion of the chain corresponds to Lys-157–Gly-198. Residues Leu-199–Phe-219 form a helical membrane-spanning segment. The Periplasmic segment spans residues Ala-220–Pro-225. A helical membrane pass occupies residues Ala-226–Leu-246. Over Gly-247–Arg-261 the chain is Cytoplasmic. Residues Phe-262 to Ile-282 traverse the membrane as a helical segment. Residues Val-283 to Tyr-286 lie on the Periplasmic side of the membrane. Residues His-287 to Ile-307 form a helical membrane-spanning segment. Residues Asn-308–Gly-321 lie on the Cytoplasmic side of the membrane.

The protein belongs to the TerC family.

The protein resides in the cell inner membrane. In terms of biological role, has been proposed to be a redox modulator. The protein is Putative membrane-bound redox modulator Alx of Escherichia coli (strain K12).